Here is a 455-residue protein sequence, read N- to C-terminus: Bifunctional protein GlmU (455 aa).

Residues 1–227 (MGLSVIILAA…CEEVQGVNDR (227 aa)) are pyrophosphorylase. UDP-N-acetyl-alpha-D-glucosamine contacts are provided by residues 8 to 11 (LAAG), Lys-22, Gln-73, 78 to 79 (GT), 100 to 102 (YGD), Gly-137, Glu-152, Asn-167, and Asn-225. Asp-102 contributes to the Mg(2+) binding site. Residue Asn-225 coordinates Mg(2+). Residues 228–248 (WELTKLERYYQRLMAKKLSLA) are linker. The tract at residues 249 to 455 (GVTIIDPERF…KGWHRPTKKE (207 aa)) is N-acetyltransferase. UDP-N-acetyl-alpha-D-glucosamine is bound by residues Arg-332 and Lys-350. His-362 functions as the Proton acceptor in the catalytic mechanism. UDP-N-acetyl-alpha-D-glucosamine contacts are provided by Tyr-365 and Asn-376. Residues Ala-379, 385–386 (NY), Ser-404, Ala-422, and Arg-439 contribute to the acetyl-CoA site.

In the N-terminal section; belongs to the N-acetylglucosamine-1-phosphate uridyltransferase family. The protein in the C-terminal section; belongs to the transferase hexapeptide repeat family. As to quaternary structure, homotrimer. It depends on Mg(2+) as a cofactor.

It localises to the cytoplasm. It catalyses the reaction alpha-D-glucosamine 1-phosphate + acetyl-CoA = N-acetyl-alpha-D-glucosamine 1-phosphate + CoA + H(+). It carries out the reaction N-acetyl-alpha-D-glucosamine 1-phosphate + UTP + H(+) = UDP-N-acetyl-alpha-D-glucosamine + diphosphate. The protein operates within nucleotide-sugar biosynthesis; UDP-N-acetyl-alpha-D-glucosamine biosynthesis; N-acetyl-alpha-D-glucosamine 1-phosphate from alpha-D-glucosamine 6-phosphate (route II): step 2/2. It participates in nucleotide-sugar biosynthesis; UDP-N-acetyl-alpha-D-glucosamine biosynthesis; UDP-N-acetyl-alpha-D-glucosamine from N-acetyl-alpha-D-glucosamine 1-phosphate: step 1/1. Its pathway is bacterial outer membrane biogenesis; LPS lipid A biosynthesis. Its function is as follows. Catalyzes the last two sequential reactions in the de novo biosynthetic pathway for UDP-N-acetylglucosamine (UDP-GlcNAc). The C-terminal domain catalyzes the transfer of acetyl group from acetyl coenzyme A to glucosamine-1-phosphate (GlcN-1-P) to produce N-acetylglucosamine-1-phosphate (GlcNAc-1-P), which is converted into UDP-GlcNAc by the transfer of uridine 5-monophosphate (from uridine 5-triphosphate), a reaction catalyzed by the N-terminal domain. The polypeptide is Bifunctional protein GlmU (Coxiella burnetii (strain CbuG_Q212) (Coxiella burnetii (strain Q212))).